The primary structure comprises 120 residues: NAD(P)H-quinone oxidoreductase subunit 3, chloroplastic (120 aa).

Helical transmembrane passes span 9–29 (IFWAFLIISSVIPILAFFISG), 64–84 (MFALVFVVFDVETVFLYPWAM), and 88–108 (VLGVSVFIEALIFVLILIVGS).

The protein belongs to the complex I subunit 3 family. In terms of assembly, NDH is composed of at least 16 different subunits, 5 of which are encoded in the nucleus.

The protein resides in the plastid. It is found in the chloroplast thylakoid membrane. It carries out the reaction a plastoquinone + NADH + (n+1) H(+)(in) = a plastoquinol + NAD(+) + n H(+)(out). It catalyses the reaction a plastoquinone + NADPH + (n+1) H(+)(in) = a plastoquinol + NADP(+) + n H(+)(out). NDH shuttles electrons from NAD(P)H:plastoquinone, via FMN and iron-sulfur (Fe-S) centers, to quinones in the photosynthetic chain and possibly in a chloroplast respiratory chain. The immediate electron acceptor for the enzyme in this species is believed to be plastoquinone. Couples the redox reaction to proton translocation, and thus conserves the redox energy in a proton gradient. This chain is NAD(P)H-quinone oxidoreductase subunit 3, chloroplastic, found in Vitis vinifera (Grape).